Reading from the N-terminus, the 172-residue chain is C-phycocyanin beta chain (172 aa).

(2R,3E)-phycocyanobilin contacts are provided by residues Asn35, Asp39, Asn72, Arg77, Cys82, Cys82 to Ile88, Thr149 to Gly151, and Cys153. Asn72 bears the N4-methylasparagine mark.

This sequence belongs to the phycobiliprotein family. Heterodimer of an alpha and a beta subunit. Dimers further assemble into trimers and the trimers into hexamers. The basic functional unit of phycobiliproteins is a ring-shaped hexamer formed from two back-to-back trimers contacting via the alpha chain subunits. The trimers are composed of alpha/beta subunit heterodimers arranged around a three-fold axis of symmetry. The phycoerythrins also contain a gamma subunit which is located in the center of the hexamer. Post-translationally, contains two covalently linked phycocyanobilin chromophores.

It is found in the plastid. Its subcellular location is the chloroplast thylakoid membrane. Functionally, light-harvesting photosynthetic tetrapyrrole chromophore-protein from the phycobiliprotein complex (phycobilisome, PBS). Phycocyanin is the major phycobiliprotein in the PBS rod. The chain is C-phycocyanin beta chain (cpcB) from Galdieria sulphuraria (Red alga).